We begin with the raw amino-acid sequence, 268 residues long: Hydroxyethylthiazole kinase (268 aa).

Met49 contacts substrate. ATP contacts are provided by Lys124 and Thr168. Residue Ala195 coordinates substrate.

It belongs to the Thz kinase family. The cofactor is Mg(2+).

The catalysed reaction is 5-(2-hydroxyethyl)-4-methylthiazole + ATP = 4-methyl-5-(2-phosphooxyethyl)-thiazole + ADP + H(+). Its pathway is cofactor biosynthesis; thiamine diphosphate biosynthesis; 4-methyl-5-(2-phosphoethyl)-thiazole from 5-(2-hydroxyethyl)-4-methylthiazole: step 1/1. Catalyzes the phosphorylation of the hydroxyl group of 4-methyl-5-beta-hydroxyethylthiazole (THZ). This is Hydroxyethylthiazole kinase from Archaeoglobus fulgidus (strain ATCC 49558 / DSM 4304 / JCM 9628 / NBRC 100126 / VC-16).